The chain runs to 557 residues: Ribonuclease J 2 (557 aa).

Zn(2+) is bound by residues H76, H78, H144, and E166. 366-370 (HASSH) lines the substrate pocket.

This sequence belongs to the metallo-beta-lactamase superfamily. RNA-metabolizing metallo-beta-lactamase-like family. Bacterial RNase J subfamily. Homodimer, may be a subunit of the RNA degradosome. Zn(2+) serves as cofactor.

Its subcellular location is the cytoplasm. Its function is as follows. An RNase that has 5'-3' exonuclease and possibly endoonuclease activity. Involved in maturation of rRNA and in some organisms also mRNA maturation and/or decay. The polypeptide is Ribonuclease J 2 (Staphylococcus saprophyticus subsp. saprophyticus (strain ATCC 15305 / DSM 20229 / NCIMB 8711 / NCTC 7292 / S-41)).